Consider the following 495-residue polypeptide: ATP synthase subunit beta, chloroplastic (495 aa).

172-179 (GGAGVGKT) is an ATP binding site.

It belongs to the ATPase alpha/beta chains family. In terms of assembly, F-type ATPases have 2 components, CF(1) - the catalytic core - and CF(0) - the membrane proton channel. CF(1) has five subunits: alpha(3), beta(3), gamma(1), delta(1), epsilon(1). CF(0) has four main subunits: a(1), b(1), b'(1) and c(9-12).

The protein localises to the plastid. It localises to the chloroplast thylakoid membrane. It catalyses the reaction ATP + H2O + 4 H(+)(in) = ADP + phosphate + 5 H(+)(out). Its function is as follows. Produces ATP from ADP in the presence of a proton gradient across the membrane. The catalytic sites are hosted primarily by the beta subunits. In Scilla siberica (Siberian squill), this protein is ATP synthase subunit beta, chloroplastic.